A 431-amino-acid chain; its full sequence is tRNA(Ile)-lysidine synthase (431 aa).

ATP is bound at residue 19 to 24 (STGIDS).

This sequence belongs to the tRNA(Ile)-lysidine synthase family.

Its subcellular location is the cytoplasm. It catalyses the reaction cytidine(34) in tRNA(Ile2) + L-lysine + ATP = lysidine(34) in tRNA(Ile2) + AMP + diphosphate + H(+). Its function is as follows. Ligates lysine onto the cytidine present at position 34 of the AUA codon-specific tRNA(Ile) that contains the anticodon CAU, in an ATP-dependent manner. Cytidine is converted to lysidine, thus changing the amino acid specificity of the tRNA from methionine to isoleucine. The polypeptide is tRNA(Ile)-lysidine synthase (Staphylococcus aureus (strain MW2)).